A 483-amino-acid chain; its full sequence is Glycogen synthase (483 aa).

Position 15 (Lys-15) interacts with ADP-alpha-D-glucose.

Belongs to the glycosyltransferase 1 family. Bacterial/plant glycogen synthase subfamily.

The enzyme catalyses [(1-&gt;4)-alpha-D-glucosyl](n) + ADP-alpha-D-glucose = [(1-&gt;4)-alpha-D-glucosyl](n+1) + ADP + H(+). It participates in glycan biosynthesis; glycogen biosynthesis. Its function is as follows. Synthesizes alpha-1,4-glucan chains using ADP-glucose. The sequence is that of Glycogen synthase from Desulfatibacillum aliphaticivorans.